Here is a 209-residue protein sequence, read N- to C-terminus: Geminin (209 aa).

The disordered stretch occupies residues 1–79 (MNPSMKQKQE…PESSENKNLG (79 aa)). Residues 7-16 (QKQEEIKENI) show a composition bias toward basic and acidic residues. N6-acetyllysine is present on Lys27. Phosphoserine is present on residues Ser34, Ser36, Ser49, Ser63, and Ser64. Positions 82–161 (TQESFDLMIK…AELIERLNGE (80 aa)) are necessary and sufficient for interaction with IDAS and CDT1. Residues 94 to 144 (PSSQYWKEVAEKRRKALYEALKENEKLHKEIEQKDNEIARLKKENKELAEV) are a coiled coil. The tract at residues 164 to 209 (DNFESLDNQEFDSEEETVEDSLVEDSEIGTCAEGTVSSSTDAKPCI) is disordered. Residues 170-190 (DNQEFDSEEETVEDSLVEDSE) are homeodomain binding. Positions 170–190 (DNQEFDSEEETVEDSLVEDSE) are enriched in acidic residues. Ser184 carries the post-translational modification Phosphoserine; by CK2. Positions 198-209 (TVSSSTDAKPCI) are enriched in polar residues.

It belongs to the geminin family. As to quaternary structure, homotetramer. Interacts with CDT1; this inhibits binding of the MCM complex to origins of replication. The complex with CDT1 exists in two forms, a 'permissive' heterotrimer and an 'inhibitory' heterohexamer. Interacts (via coiled-coil domain) with IDAS (via coiled-coil domain); this targets GMNN to the nucleus. The heterodimer formed by GMNN and MCIDAS has much lower affinity for CDT1 than the GMNN homodimer. Interacts with a subset of Hox proteins, affinity increasing from anterior to posterior types, the strongest interaction being with HOXB1, HOXC9 and HOXD10. Interacts with LRWD1 from G1/S to mitosis. Post-translationally, phosphorylated during mitosis. Phosphorylation at Ser-184 by CK2 results in enhanced binding to Hox proteins and more potent inhibitory effect on Hox transcriptional activity.

The protein resides in the cytoplasm. It localises to the nucleus. Functionally, inhibits DNA replication by preventing the incorporation of MCM complex into pre-replication complex (pre-RC). It is degraded during the mitotic phase of the cell cycle. Its destruction at the metaphase-anaphase transition permits replication in the succeeding cell cycle. Inhibits histone acetyltransferase activity of KAT7/HBO1 in a CDT1-dependent manner, inhibiting histone H4 acetylation and DNA replication licensing. Inhibits the transcriptional activity of a subset of Hox proteins, enrolling them in cell proliferative control. The sequence is that of Geminin (GMNN) from Homo sapiens (Human).